A 145-amino-acid chain; its full sequence is D-aminoacyl-tRNA deacylase (145 aa).

The Gly-cisPro motif, important for rejection of L-amino acids motif lies at 137-138; that stretch reads GP.

This sequence belongs to the DTD family. Homodimer.

Its subcellular location is the cytoplasm. It carries out the reaction glycyl-tRNA(Ala) + H2O = tRNA(Ala) + glycine + H(+). The enzyme catalyses a D-aminoacyl-tRNA + H2O = a tRNA + a D-alpha-amino acid + H(+). Functionally, an aminoacyl-tRNA editing enzyme that deacylates mischarged D-aminoacyl-tRNAs. Also deacylates mischarged glycyl-tRNA(Ala), protecting cells against glycine mischarging by AlaRS. Acts via tRNA-based rather than protein-based catalysis; rejects L-amino acids rather than detecting D-amino acids in the active site. By recycling D-aminoacyl-tRNA to D-amino acids and free tRNA molecules, this enzyme counteracts the toxicity associated with the formation of D-aminoacyl-tRNA entities in vivo and helps enforce protein L-homochirality. The protein is D-aminoacyl-tRNA deacylase of Pseudoalteromonas translucida (strain TAC 125).